Consider the following 356-residue polypeptide: MAKEHICIIYGGKSAEHDVSLLTAQSVINAMDKDKYAIDTIYITNDGEWLKGPEISETIEDSERLRLSHIERLSISEMLNVSSAGKAYDAVFPLLHGPNGEDGTIQGLFEVLDIPYVGNGVLAASTSMDKLVMKQLFATRGLPQLPYVSFLKSEYEAHKDNIISLVEGKLTYPVFVKPANLGSSVGISKCTDSETLIHGIEEALQFDRKLVIEQGVNAREVEVAVLGNDTPETTLPGEVVKDVDFYDYKSKYKDGKVRLQIPADISEEIQSALRDMAVEAFKATDCSGLVRADFFLTEDDKIYINETNAMPGFTKFSMYPLLWENMGKSYSELITDLINLAKERYKDKKNIKYKMD.

The 206-residue stretch at 134–339 folds into the ATP-grasp domain; sequence KQLFATRGLP…YSELITDLIN (206 aa). 167 to 222 serves as a coordination point for ATP; it reads EGKLTYPVFVKPANLGSSVGISKCTDSETLIHGIEEALQFDRKLVIEQGVNAREVE. Mg(2+) is bound by residues D293, E306, and N308.

The protein belongs to the D-alanine--D-alanine ligase family. Requires Mg(2+) as cofactor. The cofactor is Mn(2+).

The protein localises to the cytoplasm. The enzyme catalyses 2 D-alanine + ATP = D-alanyl-D-alanine + ADP + phosphate + H(+). It functions in the pathway cell wall biogenesis; peptidoglycan biosynthesis. In terms of biological role, cell wall formation. The sequence is that of D-alanine--D-alanine ligase from Macrococcus caseolyticus (strain JCSC5402) (Macrococcoides caseolyticum).